The following is a 1215-amino-acid chain: Cellulose synthase-like protein D4 (1215 aa).

Disordered stretches follow at residues Gly24–Ser46 and Ser206–Gln231. Over residues Asp207 to Ala222 the composition is skewed to acidic residues. The next 2 helical transmembrane spans lie at Ala321–Leu341 and Ala352–Leu372. Residues Asp452 and Asp905 contribute to the active site. A run of 6 helical transmembrane segments spans residues Val988 to Val1008, Thr1014 to Ile1034, Pro1060 to Leu1080, Leu1114 to Ala1134, Leu1147 to Gly1167, and Thr1177 to Ile1197.

The protein belongs to the glycosyltransferase 2 family. Plant cellulose synthase-like D subfamily.

It is found in the golgi apparatus membrane. In terms of biological role, thought to be a Golgi-localized beta-glycan synthase that polymerize the backbones of noncellulosic polysaccharides (hemicelluloses) of plant cell wall. The sequence is that of Cellulose synthase-like protein D4 (CSLD4) from Oryza sativa subsp. japonica (Rice).